The primary structure comprises 210 residues: Probable GTP-binding protein EngB (210 aa).

Residues 25–199 (CGIEVAFAGR…RQKLDSWFSE (175 aa)) form the EngB-type G domain. GTP is bound by residues 33-40 (GRSNAGKS), 60-64 (GRTQL), 78-81 (DLPG), 145-148 (TKAD), and 178-180 (FSS). Residues Ser40 and Thr62 each coordinate Mg(2+).

It belongs to the TRAFAC class TrmE-Era-EngA-EngB-Septin-like GTPase superfamily. EngB GTPase family. The cofactor is Mg(2+).

In terms of biological role, necessary for normal cell division and for the maintenance of normal septation. The protein is Probable GTP-binding protein EngB of Salmonella agona (strain SL483).